A 447-amino-acid chain; its full sequence is Transducin beta-like protein 2 (447 aa).

Residues 38-72 form a disordered region; sequence RSGRPACQKANGFPPDKSSGSKKQKQYQRIRKEKP. Basic residues predominate over residues 57–69; sequence GSKKQKQYQRIRK. WD repeat units follow at residues 88 to 127, 134 to 174, 186 to 226, 228 to 267, 277 to 316, 329 to 367, and 371 to 409; these read SHSGNISCMDFSSNGKYLATCADDRTIRIWSTKDFLQREH, VELD…DGGY, KHKA…STIN, NQMNNTHAAVSPCGRFVASCGFTPDVKVWEVCFGKKGEFQ, GHSAAVHSFAFSNDSRRMASVSKDGTWKLWDTDVEYKKKQ, AAGAAPCRLALSPNAQVLALASGSSIHLYNTRRGEKEEC, and VHGECIANLSFDITGRFLASCGDRAVRLFHNTPGHRAMV. K168 participates in a covalent cross-link: Glycyl lysine isopeptide (Lys-Gly) (interchain with G-Cter in SUMO2). Position 433 is a phosphothreonine; by ATM or ATR (T433).

The protein is Transducin beta-like protein 2 (TBL2) of Homo sapiens (Human).